We begin with the raw amino-acid sequence, 299 residues long: Diphthine methyl ester synthase 1 (299 aa).

S-adenosyl-L-methionine contacts are provided by residues leucine 9, aspartate 85, glycine 88, 113–114 (SV), leucine 164, leucine 222, and histidine 247.

The protein belongs to the diphthine synthase family.

It is found in the cytoplasm. The enzyme catalyses 2-[(3S)-amino-3-carboxypropyl]-L-histidyl-[translation elongation factor 2] + 4 S-adenosyl-L-methionine = diphthine methyl ester-[translation elongation factor 2] + 4 S-adenosyl-L-homocysteine + 3 H(+). Its pathway is protein modification; peptidyl-diphthamide biosynthesis. S-adenosyl-L-methionine-dependent methyltransferase that catalyzes four methylations of the modified target histidine residue in translation elongation factor 2 (EF-2), to form an intermediate called diphthine methyl ester. The four successive methylation reactions represent the second step of diphthamide biosynthesis. The polypeptide is Diphthine methyl ester synthase 1 (DPH5) (Candida albicans (strain SC5314 / ATCC MYA-2876) (Yeast)).